We begin with the raw amino-acid sequence, 437 residues long: Homogentisate 1,2-dioxygenase (437 aa).

Residues 15–34 (NEHATSDPRVPDALPVGQNS) are disordered. Positions 336, 342, and 372 each coordinate Fe cation.

It belongs to the homogentisate dioxygenase family. Requires Fe cation as cofactor. In terms of tissue distribution, expressed in the hypodermis and intestine.

The enzyme catalyses homogentisate + O2 = 4-maleylacetoacetate + H(+). It functions in the pathway amino-acid degradation; L-phenylalanine degradation; acetoacetate and fumarate from L-phenylalanine: step 4/6. Its function is as follows. Plays a role in the tyrosine degradation pathway. The chain is Homogentisate 1,2-dioxygenase from Caenorhabditis elegans.